Here is a 278-residue protein sequence, read N- to C-terminus: Autotransporter adhesin BtaF (278 aa).

Positions 1 to 29 (MKLPPVFVFELVENQGLANIALIRPRVIA) are cleaved as a signal peptide. The surface exposed passenger domain stretch occupies residues 30-182 (PDNNLRPGGI…RAAIRQNSAA (153 aa)). The interval 186 to 224 (LGQRVDGLQGQINSARKEARAGAANAAALSGLRYDNRPG) is outer membrane translocation of the passenger domain. The tract at residues 225–278 (KVSIATGVGGFKGSTALAAGIGYTSKNENARYNVSVAYNEAGTSWNAGASFTLN) is translocator domain.

This sequence belongs to the autotransporter-2 (AT-2) (TC 1.B.40) family. In terms of assembly, homotrimer.

Its subcellular location is the cell surface. It is found in the cell outer membrane. In terms of biological role, participates in bacterial attachment to several surfaces, including various extracellular matrix (ECM) components and a hydrophobic abiotic surface. Involved in adhesion to host epithelial cells and is required for full virulence in mice. Also implicated in the resistance to porcine serum. The sequence is that of Autotransporter adhesin BtaF from Brucella suis biovar 1 (strain 1330).